A 256-amino-acid chain; its full sequence is Thiazole synthase (256 aa).

The active-site Schiff-base intermediate with DXP is the Lys95. Residues Gly156, 182-183 (AG), and 204-205 (NT) contribute to the 1-deoxy-D-xylulose 5-phosphate site.

Belongs to the ThiG family. As to quaternary structure, homotetramer. Forms heterodimers with either ThiH or ThiS.

The protein resides in the cytoplasm. The catalysed reaction is [ThiS sulfur-carrier protein]-C-terminal-Gly-aminoethanethioate + 2-iminoacetate + 1-deoxy-D-xylulose 5-phosphate = [ThiS sulfur-carrier protein]-C-terminal Gly-Gly + 2-[(2R,5Z)-2-carboxy-4-methylthiazol-5(2H)-ylidene]ethyl phosphate + 2 H2O + H(+). The protein operates within cofactor biosynthesis; thiamine diphosphate biosynthesis. Functionally, catalyzes the rearrangement of 1-deoxy-D-xylulose 5-phosphate (DXP) to produce the thiazole phosphate moiety of thiamine. Sulfur is provided by the thiocarboxylate moiety of the carrier protein ThiS. In vitro, sulfur can be provided by H(2)S. The protein is Thiazole synthase of Salmonella schwarzengrund (strain CVM19633).